A 269-amino-acid chain; its full sequence is Formamidopyrimidine-DNA glycosylase (269 aa).

Residue proline 2 is the Schiff-base intermediate with DNA of the active site. Residue glutamate 3 is the Proton donor of the active site. Lysine 57 functions as the Proton donor; for beta-elimination activity in the catalytic mechanism. 3 residues coordinate DNA: histidine 90, arginine 109, and lysine 150. An FPG-type zinc finger spans residues 235–269; sequence QVYGRAGEPCRQCGHPIEIAKHGQRSTFFCRHCQH. Arginine 259 functions as the Proton donor; for delta-elimination activity in the catalytic mechanism.

The protein belongs to the FPG family. Monomer. Zn(2+) is required as a cofactor.

It catalyses the reaction Hydrolysis of DNA containing ring-opened 7-methylguanine residues, releasing 2,6-diamino-4-hydroxy-5-(N-methyl)formamidopyrimidine.. The catalysed reaction is 2'-deoxyribonucleotide-(2'-deoxyribose 5'-phosphate)-2'-deoxyribonucleotide-DNA = a 3'-end 2'-deoxyribonucleotide-(2,3-dehydro-2,3-deoxyribose 5'-phosphate)-DNA + a 5'-end 5'-phospho-2'-deoxyribonucleoside-DNA + H(+). In terms of biological role, involved in base excision repair of DNA damaged by oxidation or by mutagenic agents. Acts as a DNA glycosylase that recognizes and removes damaged bases. Has a preference for oxidized purines, such as 7,8-dihydro-8-oxoguanine (8-oxoG). Has AP (apurinic/apyrimidinic) lyase activity and introduces nicks in the DNA strand. Cleaves the DNA backbone by beta-delta elimination to generate a single-strand break at the site of the removed base with both 3'- and 5'-phosphates. This is Formamidopyrimidine-DNA glycosylase from Yersinia pseudotuberculosis serotype O:1b (strain IP 31758).